Here is a 471-residue protein sequence, read N- to C-terminus: MSLNRRQFIQASGLALCAGMTPLAAKASGNPAALPIPPLLESRRGQPLFLTMQRAHWAFSGDRKTSIWGINGRYLGPTVRVYDGDDVKLIYSNRLNEPVAMTIGGLQVPGPLMGGAARIISPGGDWSPVLPIRQSSATCWYHANTPNRMAPHIYNGLVGLWLVEDSTSKSLPLPNHYGVDDFPLIIQDKRLDNFGVPLYNPPSSGGFVGDSLLVNGVQSPFVEVSRGWVRLRLLNASNSRRYVMRLSDGRAMNVIASDQGLLPAPMAVNQLSLAPGERREILIDMSQGEEVTLTAGESAGIMDRLRGLFEPSSILISTQILTLKPTGLLPLVTDNLPMRLLADNIIEGSISRTREFRLGDSLPGINGAMWDMTRADVQTQLGRCERWIIHADTPQAFHIQGVKFLVRSANGRPPAVEDSGWKDTVWIDNDVELLVYFMQPSSMAFPFLYYSQTLELADRGSTGQLIVQSAM.

Positions 1–27 (MSLNRRQFIQASGLALCAGMTPLAAKA) form a signal peptide, tat-type signal. One can recognise a Plastocyanin-like domain in the interval 229-287 (VRLRLLNASNSRRYVMRLSDGRAMNVIASDQGLLPAPMAVNQLSLAPGERREILIDMSQ).

This sequence belongs to the FtsP family. Predicted to be exported by the Tat system. The position of the signal peptide cleavage has not been experimentally proven.

The protein resides in the periplasm. Functionally, cell division protein that is required for growth during stress conditions. May be involved in protecting or stabilizing the divisomal assembly under conditions of stress. This chain is Cell division protein FtsP, found in Pectobacterium atrosepticum (strain SCRI 1043 / ATCC BAA-672) (Erwinia carotovora subsp. atroseptica).